A 312-amino-acid chain; its full sequence is tRNA-dihydrouridine(16) synthase (312 aa).

Residues Pro-7–Glu-9 and Gln-68 contribute to the FMN site. Cys-98 acts as the Proton donor in catalysis. FMN-binding positions include Lys-139, Asn-200–Glu-202, and Gly-224–Arg-225.

Belongs to the Dus family. DusC subfamily. FMN is required as a cofactor.

It carries out the reaction 5,6-dihydrouridine(16) in tRNA + NADP(+) = uridine(16) in tRNA + NADPH + H(+). The enzyme catalyses 5,6-dihydrouridine(16) in tRNA + NAD(+) = uridine(16) in tRNA + NADH + H(+). Functionally, catalyzes the synthesis of 5,6-dihydrouridine (D), a modified base found in the D-loop of most tRNAs, via the reduction of the C5-C6 double bond in target uridines. Specifically modifies U16 in tRNAs. This is tRNA-dihydrouridine(16) synthase from Salmonella typhimurium (strain LT2 / SGSC1412 / ATCC 700720).